Reading from the N-terminus, the 254-residue chain is MAGHSKWANTKHRKAAQDAKKGKIFTKIIRELVTSARLGGGDPASNPRLRTAIDKALSHNMTRDTLNRAIARGIGGGEDSHMENILYEGYGPAGTAVMVSCLSDNRNRTVSEVRHAFTKTGGNLGTGGSVSYLFTKKGVFSYAPGLNEDQVMELALESGADDIMVYDDGAIDIFSSPEFFETIKKTLETAGLMASTAEISMIPSTKIDLNLENAQRLLRLIDMLEDSDDVQEVYHNGDFSDEISAALFFKNTKP.

Residues 1-20 (MAGHSKWANTKHRKAAQDAK) are disordered.

Belongs to the TACO1 family.

The protein resides in the cytoplasm. In Hamiltonella defensa subsp. Acyrthosiphon pisum (strain 5AT), this protein is Probable transcriptional regulatory protein HDEF_0869.